We begin with the raw amino-acid sequence, 482 residues long: tRNA sulfurtransferase (482 aa).

The THUMP domain occupies 61-165; it reads LAIRDALTRI…DDRLLLIKGR (105 aa). ATP contacts are provided by residues 183–184, Lys-265, Gly-287, and Gln-296; that span reads LI. Cys-344 and Cys-456 are disulfide-bonded. The region spanning 404 to 482 is the Rhodanese domain; that stretch reads FGPNDVILDI…GFNNVKVYRP (79 aa). Catalysis depends on Cys-456, which acts as the Cysteine persulfide intermediate.

Belongs to the ThiI family.

Its subcellular location is the cytoplasm. The catalysed reaction is [ThiI sulfur-carrier protein]-S-sulfanyl-L-cysteine + a uridine in tRNA + 2 reduced [2Fe-2S]-[ferredoxin] + ATP + H(+) = [ThiI sulfur-carrier protein]-L-cysteine + a 4-thiouridine in tRNA + 2 oxidized [2Fe-2S]-[ferredoxin] + AMP + diphosphate. It carries out the reaction [ThiS sulfur-carrier protein]-C-terminal Gly-Gly-AMP + S-sulfanyl-L-cysteinyl-[cysteine desulfurase] + AH2 = [ThiS sulfur-carrier protein]-C-terminal-Gly-aminoethanethioate + L-cysteinyl-[cysteine desulfurase] + A + AMP + 2 H(+). The protein operates within cofactor biosynthesis; thiamine diphosphate biosynthesis. In terms of biological role, catalyzes the ATP-dependent transfer of a sulfur to tRNA to produce 4-thiouridine in position 8 of tRNAs, which functions as a near-UV photosensor. Also catalyzes the transfer of sulfur to the sulfur carrier protein ThiS, forming ThiS-thiocarboxylate. This is a step in the synthesis of thiazole, in the thiamine biosynthesis pathway. The sulfur is donated as persulfide by IscS. The chain is tRNA sulfurtransferase from Escherichia coli O45:K1 (strain S88 / ExPEC).